Here is a 151-residue protein sequence, read N- to C-terminus: MQVILLEKVSNLGNLGEVVRVRDGYARNFLIPQKKARRATDAALKEFEARRVELEKIQAEKLAAAQALGERLNGYQLKVAQKAGVDGRLFGSVTNADIAEGLRTAGFEGVEKSQVRLPNGQLKTVGEFPIQVGLHADVLVDVTVLVEGEMN.

Belongs to the bacterial ribosomal protein bL9 family.

Binds to the 23S rRNA. The sequence is that of Large ribosomal subunit protein bL9 from Bordetella avium (strain 197N).